The following is a 342-amino-acid chain: Inositol 2-dehydrogenase 2 (342 aa).

The protein belongs to the Gfo/Idh/MocA family. In terms of assembly, homotetramer.

It carries out the reaction myo-inositol + NAD(+) = scyllo-inosose + NADH + H(+). Functionally, involved in the oxidation of myo-inositol (MI) to 2-keto-myo-inositol (2KMI or 2-inosose). The polypeptide is Inositol 2-dehydrogenase 2 (Mycolicibacterium vanbaalenii (strain DSM 7251 / JCM 13017 / BCRC 16820 / KCTC 9966 / NRRL B-24157 / PYR-1) (Mycobacterium vanbaalenii)).